The sequence spans 237 residues: Ribonuclease PH (237 aa).

Phosphate is bound by residues Arg-86 and 124–126; that span reads GTR.

It belongs to the RNase PH family. Homohexameric ring arranged as a trimer of dimers.

It carries out the reaction tRNA(n+1) + phosphate = tRNA(n) + a ribonucleoside 5'-diphosphate. Functionally, phosphorolytic 3'-5' exoribonuclease that plays an important role in tRNA 3'-end maturation. Removes nucleotide residues following the 3'-CCA terminus of tRNAs; can also add nucleotides to the ends of RNA molecules by using nucleoside diphosphates as substrates, but this may not be physiologically important. Probably plays a role in initiation of 16S rRNA degradation (leading to ribosome degradation) during starvation. The polypeptide is Ribonuclease PH (Tolumonas auensis (strain DSM 9187 / NBRC 110442 / TA 4)).